The sequence spans 210 residues: 3-hexulose-6-phosphate synthase 3 (210 aa).

Belongs to the HPS/KGPDC family. HPS subfamily.

It carries out the reaction D-ribulose 5-phosphate + formaldehyde = D-arabino-hex-3-ulose 6-phosphate. It functions in the pathway one-carbon metabolism; formaldehyde assimilation via RuMP pathway; D-fructose 6-phosphate from D-ribulose 5-phosphate and formaldehyde: step 1/2. Its function is as follows. Catalyzes the condensation of ribulose 5-phosphate with formaldehyde to form 3-hexulose 6-phosphate. This chain is 3-hexulose-6-phosphate synthase 3, found in Staphylococcus saprophyticus subsp. saprophyticus (strain ATCC 15305 / DSM 20229 / NCIMB 8711 / NCTC 7292 / S-41).